A 114-amino-acid polypeptide reads, in one-letter code: Fumarate reductase subunit D (114 aa).

3 consecutive transmembrane segments (helical) span residues 24-44 (VSAI…PFGL), 50-70 (LITF…TIFP), and 92-112 (GGFI…FAVI).

The protein belongs to the FrdD family. Part of an enzyme complex containing four subunits: a flavoprotein (FrdA), an iron-sulfur protein (FrdB), and two hydrophobic anchor proteins (FrdC and FrdD).

The protein localises to the cell inner membrane. Its function is as follows. Anchors the catalytic components of the fumarate reductase complex to the cell membrane, binds quinones. This Haemophilus influenzae (strain 86-028NP) protein is Fumarate reductase subunit D.